A 151-amino-acid polypeptide reads, in one-letter code: MRIRIVVGGKLDNFIKMGVDHYKKFLRRFCKTEIIELKRTHGGSVEEIVKRETEELKKRVLPGSLMVVMDRRGENLSSEEFAGFLKEVEMKGKDITFLIGGPYGLSEEILSEAHRVFSLSRMTFTHGMSVLIVLEQVFRAFKIIRGENYHY.

Residues Gly100 and 119 to 124 (LSRMTF) each bind S-adenosyl-L-methionine.

It belongs to the RNA methyltransferase RlmH family. In terms of assembly, homodimer.

Its subcellular location is the cytoplasm. It catalyses the reaction pseudouridine(1915) in 23S rRNA + S-adenosyl-L-methionine = N(3)-methylpseudouridine(1915) in 23S rRNA + S-adenosyl-L-homocysteine + H(+). Functionally, specifically methylates the pseudouridine at position 1915 (m3Psi1915) in 23S rRNA. The chain is Ribosomal RNA large subunit methyltransferase H from Thermotoga neapolitana (strain ATCC 49049 / DSM 4359 / NBRC 107923 / NS-E).